The chain runs to 243 residues: MNSSTDNLFAKPYEQVSDFQFDDKVAGVFNDMIRRSVPGYGQIINTIGDLAQKYAATNTKIYDLGCSLGAATLSIRRRVEGRNCQIVAIDNSESMIERCNENLSAYVSETPVELICGDIRDIKIENASLVVLNFTMQFLSPDDRENLLENIYQGLIPGGLLILSEKLYFKEDKIQSTLDDLHLDFKRANGYSELEISQKRSSLENVMKPDTLAEHENRIRSLGFSQFSVWFQCFNFASMVAIK.

S-adenosyl-L-methionine-binding positions include Tyr-40, 65–67 (GCS), 90–91 (DN), 118–119 (DI), Asn-133, and Arg-200.

The protein belongs to the class I-like SAM-binding methyltransferase superfamily. Cx-SAM synthase family. Homodimer.

It carries out the reaction prephenate + S-adenosyl-L-methionine = carboxy-S-adenosyl-L-methionine + 3-phenylpyruvate + H2O. In terms of biological role, catalyzes the conversion of S-adenosyl-L-methionine (SAM) to carboxy-S-adenosyl-L-methionine (Cx-SAM). The polypeptide is Carboxy-S-adenosyl-L-methionine synthase (Shewanella halifaxensis (strain HAW-EB4)).